The primary structure comprises 276 residues: Probable endonuclease 4 (276 aa).

The Zn(2+) site is built by His-66, His-106, Glu-141, Asp-175, His-178, His-210, Asp-223, His-225, and Glu-255.

This sequence belongs to the AP endonuclease 2 family. It depends on Zn(2+) as a cofactor.

The enzyme catalyses Endonucleolytic cleavage to 5'-phosphooligonucleotide end-products.. Its function is as follows. Endonuclease IV plays a role in DNA repair. It cleaves phosphodiester bonds at apurinic or apyrimidinic (AP) sites, generating a 3'-hydroxyl group and a 5'-terminal sugar phosphate. This chain is Probable endonuclease 4, found in Heliobacterium modesticaldum (strain ATCC 51547 / Ice1).